Here is a 392-residue protein sequence, read N- to C-terminus: MGPWRCLLLLPLLAAAPRAQQQQFMEYVERRLALLEERIAQWHDQSSRYSTELRDFKNQVLGMLETAEKEREALRAEAEGAAARVDRLEREVDYLETQNPAPPCVEVDEVLMEKQAATAKQRKNEKYTKLTDCSDTIASVRAMKILKRFGSSAGLWTKDAAGSSEKIYVFDGTANDTVYIFPRMREFTLFSATRRAARIKLPYPWVGTGHLVYGGYLYYIRQQGPFQVIKFDLANKTVVDSSVFPAEEQIPVFGLSPFTYIELAADEEGLWAIYATKENEKNICLAKLDPDSLDIEQMWDTPCPRENAEGAFVVCGALHVAYNTRLPSRSRVQCVFDVSGTLPPEEASLVYFPKRYGSHSSMKYSPRERQVYAWDDGYQIIYRMEMKKKLEV.

An N-terminal signal peptide occupies residues 1 to 21; sequence MGPWRCLLLLPLLAAAPRAQQ. Positions 25–99 form a coiled coil; that stretch reads MEYVERRLAL…REVDYLETQN (75 aa). In terms of domain architecture, Olfactomedin-like spans 132–388; sequence DCSDTIASVR…QIIYRMEMKK (257 aa). A disulfide bond links Cys133 and Cys315. Residues Asn175 and Asn235 are each glycosylated (N-linked (GlcNAc...) asparagine).

Belongs to the OLFML3 family.

Its subcellular location is the secreted. Functionally, secreted scaffold protein that plays an essential role in dorsoventral patterning during early development. Stabilizes axial formation by restricting chordin (CHRD) activity on the dorsal side. Acts by facilitating the association between the tolloid proteases and their substrate chordin (CHRD), leading to enhance chordin (CHRD) degradation. In Gallus gallus (Chicken), this protein is Olfactomedin-like protein 3 (OLFML3).